Reading from the N-terminus, the 295-residue chain is Acetaldehyde dehydrogenase (295 aa).

An NAD(+)-binding site is contributed by serine 11 to isoleucine 14. The Acyl-thioester intermediate role is filled by cysteine 127. Residues serine 158–asparagine 166 and asparagine 270 contribute to the NAD(+) site.

The protein belongs to the acetaldehyde dehydrogenase family.

The enzyme catalyses acetaldehyde + NAD(+) + CoA = acetyl-CoA + NADH + H(+). The polypeptide is Acetaldehyde dehydrogenase (nbaJ) (Geobacillus thermodenitrificans (strain NG80-2)).